The sequence spans 318 residues: Oncosphere antigen A (318 aa).

Fibronectin type-III domains are found at residues 6 to 103 (IPQN…TPLP), 109 to 207 (KPSF…ISRA), and 211 to 308 (VPQN…TPSV).

In Hydatigena taeniaeformis (Feline tapeworm), this protein is Oncosphere antigen A (ONCA).